We begin with the raw amino-acid sequence, 523 residues long: Bifunctional purine biosynthesis protein PurH (523 aa).

The MGS-like domain occupies 1–149; sequence MSDPVIKRAL…KNNESVTVIT (149 aa).

It belongs to the PurH family.

It carries out the reaction (6R)-10-formyltetrahydrofolate + 5-amino-1-(5-phospho-beta-D-ribosyl)imidazole-4-carboxamide = 5-formamido-1-(5-phospho-D-ribosyl)imidazole-4-carboxamide + (6S)-5,6,7,8-tetrahydrofolate. The enzyme catalyses IMP + H2O = 5-formamido-1-(5-phospho-D-ribosyl)imidazole-4-carboxamide. Its pathway is purine metabolism; IMP biosynthesis via de novo pathway; 5-formamido-1-(5-phospho-D-ribosyl)imidazole-4-carboxamide from 5-amino-1-(5-phospho-D-ribosyl)imidazole-4-carboxamide (10-formyl THF route): step 1/1. It participates in purine metabolism; IMP biosynthesis via de novo pathway; IMP from 5-formamido-1-(5-phospho-D-ribosyl)imidazole-4-carboxamide: step 1/1. In Chlorobaculum parvum (strain DSM 263 / NCIMB 8327) (Chlorobium vibrioforme subsp. thiosulfatophilum), this protein is Bifunctional purine biosynthesis protein PurH.